The primary structure comprises 208 residues: LexA repressor (208 aa).

Positions 30–50 form a DNA-binding region, H-T-H motif; it reads VREICAAVGLSSTSTVHGHLS. Residues Ser-129 and Lys-167 each act as for autocatalytic cleavage activity in the active site.

The protein belongs to the peptidase S24 family. As to quaternary structure, homodimer.

The enzyme catalyses Hydrolysis of Ala-|-Gly bond in repressor LexA.. Functionally, represses a number of genes involved in the response to DNA damage (SOS response), including recA and lexA. In the presence of single-stranded DNA, RecA interacts with LexA causing an autocatalytic cleavage which disrupts the DNA-binding part of LexA, leading to derepression of the SOS regulon and eventually DNA repair. This Lactobacillus acidophilus (strain ATCC 700396 / NCK56 / N2 / NCFM) protein is LexA repressor.